The primary structure comprises 750 residues: uncharacterized protein (750 aa).

5 consecutive transmembrane segments (helical) span residues 2–22 (FVLLMLALVMLFIVQSSTNVI), 33–53 (SLILIPLVTLLAGSITADIFI), 79–99 (LLVLLMYLSIVAVLSTAVVSL), 116–136 (LSIFVGTILNGIIFSAVTIML), and 143–163 (IQSLIILLLFVSLFSFSSPIA). Disordered stretches follow at residues 385 to 461 (DNKG…KKKE) and 571 to 651 (NKEF…PLTA). Basic and acidic residues predominate over residues 398 to 411 (ENTKGDDNSSEKTD). The span at 412-424 (TVSVSTKLKTTAD) shows a compositional bias: polar residues. Residues 425–436 (QSESTQMSSEST) show a composition bias toward low complexity. Over residues 437–451 (ATGISSDPQSQGKMN) the composition is skewed to polar residues. Residues 452-461 (NKSEEQKKKE) are compositionally biased toward basic and acidic residues. Over residues 618 to 629 (DSKGNTATNSDT) the composition is skewed to polar residues. The helical transmembrane segment at 724-744 (ATIVITLFLTVVLLAIAFFFF) threads the bilayer.

This sequence to M.pneumoniae MPN_335.

It is found in the cell membrane. This is an uncharacterized protein from Mycoplasma pneumoniae (strain ATCC 29342 / M129 / Subtype 1) (Mycoplasmoides pneumoniae).